A 184-amino-acid polypeptide reads, in one-letter code: NADH-quinone oxidoreductase subunit B (184 aa).

Positions 37, 38, 103, and 132 each coordinate [4Fe-4S] cluster.

Belongs to the complex I 20 kDa subunit family. NDH-1 is composed of 14 different subunits. Subunits NuoB, C, D, E, F, and G constitute the peripheral sector of the complex. Requires [4Fe-4S] cluster as cofactor.

The protein localises to the cell membrane. The catalysed reaction is a quinone + NADH + 5 H(+)(in) = a quinol + NAD(+) + 4 H(+)(out). NDH-1 shuttles electrons from NADH, via FMN and iron-sulfur (Fe-S) centers, to quinones in the respiratory chain. The immediate electron acceptor for the enzyme in this species is believed to be a menaquinone. Couples the redox reaction to proton translocation (for every two electrons transferred, four hydrogen ions are translocated across the cytoplasmic membrane), and thus conserves the redox energy in a proton gradient. The protein is NADH-quinone oxidoreductase subunit B of Nocardia farcinica (strain IFM 10152).